A 121-amino-acid polypeptide reads, in one-letter code: Large ribosomal subunit protein bL12 (121 aa).

Belongs to the bacterial ribosomal protein bL12 family. Homodimer. Part of the ribosomal stalk of the 50S ribosomal subunit. Forms a multimeric L10(L12)X complex, where L10 forms an elongated spine to which 2 to 4 L12 dimers bind in a sequential fashion. Binds GTP-bound translation factors.

Forms part of the ribosomal stalk which helps the ribosome interact with GTP-bound translation factors. Is thus essential for accurate translation. The polypeptide is Large ribosomal subunit protein bL12 (Leuconostoc mesenteroides subsp. mesenteroides (strain ATCC 8293 / DSM 20343 / BCRC 11652 / CCM 1803 / JCM 6124 / NCDO 523 / NBRC 100496 / NCIMB 8023 / NCTC 12954 / NRRL B-1118 / 37Y)).